Reading from the N-terminus, the 843-residue chain is KN motif and ankyrin repeat domain-containing protein 2 (843 aa).

A disordered region spans residues 1 to 31; that stretch reads MAQVLHVPAPFPGTPGQASPAAFPSKEPDPP. The tract at residues 1–72 is interaction with AIFM1; the sequence is MAQVLHVPAP…AVQRRPRLGS (72 aa). Residues serine 19, serine 83, serine 86, serine 89, and serine 92 each carry the phosphoserine modification. Arginine 105 bears the Omega-N-methylarginine mark. The segment at 161 to 182 is disordered; that stretch reads LAGVGLLPPTPRSSGLSTPVAP. Residue threonine 170 is modified to Phosphothreonine. Coiled coils occupy residues 183-234 and 282-313; these read SAGH…QLKS and DGEA…TQQV. Residue threonine 331 is modified to Phosphothreonine. Position 358 is a phosphoserine (serine 358). Residues 410-577 form a disordered region; it reads TERSCTGAPR…VASGPDPEEE (168 aa). A compositionally biased stretch (low complexity) spans 457-470; sequence AAASQDSQAADGAG. Serine 532 carries the phosphoserine modification. Polar residues predominate over residues 547-561; sequence ATTSLEGPQLSQESQ. The ANK 0; degenerate repeat unit spans residues 606–643; the sequence is RELKVAYTTVLQEWLRLACRSDAHPELVRRHLVTFRAM. Positions 661 to 827 are interaction with NCOA1; sequence TALHYSVSHA…YSRMNIKCSF (167 aa). 5 ANK repeats span residues 673–703, 707–740, 745–774, 778–808, and 812–842; these read PVVR…TALA, TQDD…LAVS, DVVR…ACEH, EITG…ALDA, and EIAS…SSAE.

Interacts (non-phosphorylated form) with NCOA1; NCOA2 AND NCOA3. Interacts with AIFM1. Interacts with ARHGDIA; the interaction is direct and may regulate the interaction of ARHGDIA with RHOA, RAC1 and CDC42. Interacts (via ANK repeats 1-5) with KIF21A (via residues 1148-1169). Post-translationally, phosphorylated by casein kinase II upon estrogen stimulation. Phosphorylation induces the release by KANK2 of NCOA1 and its translocation to the nucleus where NCOA1 can activate gene transcription. Widely expressed with highest levels in liver and skeletal muscle.

The protein resides in the cytoplasm. It is found in the mitochondrion. In terms of biological role, involved in transcription regulation by sequestering in the cytoplasm nuclear receptor coactivators such as NCOA1, NCOA2 and NCOA3. Involved in regulation of caspase-independent apoptosis by sequestering the proapoptotic factor AIFM1 in mitochondria. Pro-apoptotic stimuli can induce its proteasomal degradation allowing the translocation of AIFM1 to the nucleus to induce apoptosis. Involved in the negative control of vitamin D receptor signaling pathway. Involved in actin stress fibers formation through its interaction with ARHGDIA and the regulation of the Rho signaling pathway. May thereby play a role in cell adhesion and migration, regulating for instance podocytes migration during development of the kidney. Through the Rho signaling pathway may also regulate cell proliferation. The sequence is that of KN motif and ankyrin repeat domain-containing protein 2 (Kank2) from Mus musculus (Mouse).